The chain runs to 727 residues: Zinc metalloproteinase nas-38 (727 aa).

The signal sequence occupies residues methionine 1–alanine 25. Residues alanine 26–lysine 114 constitute a propeptide that is removed on maturation. The region spanning arginine 113–threonine 312 is the Peptidase M12A domain. 2 disulfide bridges follow: cysteine 158–cysteine 311 and cysteine 179–cysteine 199. Residue histidine 207 coordinates Zn(2+). Residue glutamate 208 is part of the active site. Residues histidine 211 and histidine 217 each coordinate Zn(2+). The 40-residue stretch at asparagine 306 to cysteine 345 folds into the EGF-like domain. A glycan (N-linked (GlcNAc...) asparagine) is linked at asparagine 330. The 117-residue stretch at alanine 353 to asparagine 469 folds into the CUB domain. 2 disulfides stabilise this stretch: cysteine 355–cysteine 383 and cysteine 411–cysteine 432. Disordered stretches follow at residues proline 473–threonine 506 and threonine 532–serine 561. The span at threonine 535–threonine 554 shows a compositional bias: low complexity. The 49-residue stretch at glutamate 610–proline 658 folds into the TSP type-1 domain. Disulfide bonds link cysteine 611–cysteine 644, cysteine 623–cysteine 652, cysteine 627–cysteine 657, and cysteine 639–cysteine 644. N-linked (GlcNAc...) asparagine glycans are attached at residues asparagine 653 and asparagine 714.

It depends on Zn(2+) as a cofactor. As to expression, expressed in the epidermis, the excretory canal cell, duct cell, pore cell, and excretory gland cell. Expressed in an oscillating pattern in epithelial cells with increased expression during the lethargus phase which occurs during molting between larval and adult stages. Not expressed in seam cells or in the RIS neuron.

It localises to the secreted. Metalloprotease. As part of the innate immune response to molting and injury to the adult epidermis, positively regulates the activity of the transcription factor sta-2 to promote the expression of epidermal antimicrobial peptides such as nlp-29. Through regulating the expression of epidermal antimicrobial peptides such as nlp-29, modulates sleep duration and locomotion quiescence during the sleep-like state called lethargus which occurs during molting between larval and adult stages. This may occur through the sleep-active RIS neuron. This is Zinc metalloproteinase nas-38 from Caenorhabditis elegans.